A 58-amino-acid polypeptide reads, in one-letter code: Potassium channel toxin alpha-KTx 1.6 (58 aa).

Residues 1 to 21 (MKISFLLLLAIVICSIGWTEA) form the signal peptide. The residue at position 22 (Gln-22) is a Pyrrolidone carboxylic acid. 3 cysteine pairs are disulfide-bonded: Cys-28-Cys-49, Cys-34-Cys-54, and Cys-38-Cys-56.

Belongs to the short scorpion toxin superfamily. Potassium channel inhibitor family. Alpha-KTx 01 subfamily. Expressed by the venom gland.

It localises to the secreted. Its function is as follows. Potent blocker of both large-conductance calcium-activated potassium channels (KCa1.1/KCNMA1) and voltage-gated potassium channels (Kv1.3/KCNA3 and ERG1/Kv11.1/KCNH2). The protein is Potassium channel toxin alpha-KTx 1.6 of Olivierus martensii (Manchurian scorpion).